A 420-amino-acid chain; its full sequence is Gamma-glutamyl phosphate reductase (420 aa).

The protein belongs to the gamma-glutamyl phosphate reductase family.

Its subcellular location is the cytoplasm. It carries out the reaction L-glutamate 5-semialdehyde + phosphate + NADP(+) = L-glutamyl 5-phosphate + NADPH + H(+). The protein operates within amino-acid biosynthesis; L-proline biosynthesis; L-glutamate 5-semialdehyde from L-glutamate: step 2/2. Its function is as follows. Catalyzes the NADPH-dependent reduction of L-glutamate 5-phosphate into L-glutamate 5-semialdehyde and phosphate. The product spontaneously undergoes cyclization to form 1-pyrroline-5-carboxylate. This Streptococcus pneumoniae (strain 70585) protein is Gamma-glutamyl phosphate reductase.